The sequence spans 510 residues: NAD(P)H-quinone oxidoreductase subunit 2 B, chloroplastic (510 aa).

13 helical membrane passes run 24–44, 57–77, 99–119, 124–144, 150–170, 183–203, 229–249, 295–315, 323–343, 347–367, 395–415, 418–438, and 484–504; these read LLLFHGSFILPECILIFGLIL, IPWLYFISSTSLVMSITALLF, IFQFLILLCSTLCIPLSVEYI, MAITEFLLFVLTATLGGMFLC, ITIFVAPECFSLCSYLLSGYT, YLLMGGASSSILVHGFSWLYG, ISIALIFITVGIGFKLSPAPF, WHLLLEILAILSMILGNLVAI, MLAYSSIGQIGYVIIGIIVGD, GYASMITYMLFYISMNLGTFA, ALSSALCLLSLGGLPPLAGFF, LHLFWCGWQAGLYFLVSIGLL, and MIVCVIASTIPGISMNPIIAI.

This sequence belongs to the complex I subunit 2 family. NDH is composed of at least 16 different subunits, 5 of which are encoded in the nucleus.

Its subcellular location is the plastid. The protein localises to the chloroplast thylakoid membrane. The catalysed reaction is a plastoquinone + NADH + (n+1) H(+)(in) = a plastoquinol + NAD(+) + n H(+)(out). The enzyme catalyses a plastoquinone + NADPH + (n+1) H(+)(in) = a plastoquinol + NADP(+) + n H(+)(out). In terms of biological role, NDH shuttles electrons from NAD(P)H:plastoquinone, via FMN and iron-sulfur (Fe-S) centers, to quinones in the photosynthetic chain and possibly in a chloroplast respiratory chain. The immediate electron acceptor for the enzyme in this species is believed to be plastoquinone. Couples the redox reaction to proton translocation, and thus conserves the redox energy in a proton gradient. The chain is NAD(P)H-quinone oxidoreductase subunit 2 B, chloroplastic from Ceratophyllum demersum (Rigid hornwort).